The sequence spans 225 residues: MVHVSNRSIQGMNILFSSWAVVLMVMGITLDKWVELISEDERAKMNHSPWMMCCPALWPEDDLKVVRIMMTSSLGLSFLLNLILGMKFTYLIPQNKYIQLFTTILSFFSGISLLWALILYHNKLKQGQSMHFSSYRITWIMYTAYLNVFFLSVCGVLSLLECKLSTSSCTCLNIHKSDNECKESENSIEDISLPECTAMPRSIVRAHTVNSLNKKVQTRHVTWAL.

The Cytoplasmic portion of the chain corresponds to M1–S8. Residues I9–T29 form a helical membrane-spanning segment. Residues L30 to S72 lie on the Extracellular side of the membrane. A helical transmembrane segment spans residues S73–P93. Over Q94–Q99 the chain is Cytoplasmic. Residues L100–Y120 form a helical membrane-spanning segment. Residues H121–R136 lie on the Extracellular side of the membrane. A helical membrane pass occupies residues I137–L157. The Cytoplasmic segment spans residues S158–L225. An RVxF motif is present at residues R219–W223.

Interacts (via RVxF motif) with PPP1CC.

The protein resides in the cytoplasmic vesicle. It localises to the secretory vesicle. Its subcellular location is the acrosome membrane. In terms of biological role, probably inhibits protein phosphatase 1 (PP1) in sperm via binding to catalytic subunit PPP1CC. The chain is Transmembrane protein 225 (TMEM225) from Homo sapiens (Human).